We begin with the raw amino-acid sequence, 667 residues long: Mannosyl-oligosaccharide alpha-1,2-mannosidase IA (667 aa).

Residues 1 to 18 (MYRISPIGRKSNFHSREK) lie on the Cytoplasmic side of the membrane. Residues 19–39 (CLIGLVLVTLCFLCFGGIFLL) form a helical; Signal-anchor for type II membrane protein membrane-spanning segment. At 40–667 (PDNFGSDRVL…PVTLPVSNAS (628 aa)) the chain is on the lumenal side. The tract at residues 154–192 (GDNAASQASSHPQSSAQQHNQQQPQLPLGGGGNDQAPDT) is disordered. Residues 156–178 (NAASQASSHPQSSAQQHNQQQPQ) show a composition bias toward low complexity. N-linked (GlcNAc...) asparagine glycosylation is present at N278. A disulfide bond links C483 and C515. E529 acts as the Proton donor in catalysis. Ca(2+) is bound at residue T640.

The protein belongs to the glycosyl hydrolase 47 family. Ca(2+) is required as a cofactor. Requires Mg(2+) as cofactor. As to expression, complex spatial distribution during embryogenesis, including expression in lobula plate giant neurons. Also expressed in adult wing and eyes.

It is found in the golgi apparatus membrane. The catalysed reaction is N(4)-(alpha-D-Man-(1-&gt;2)-alpha-D-Man-(1-&gt;2)-alpha-D-Man-(1-&gt;3)-[alpha-D-Man-(1-&gt;2)-alpha-D-Man-(1-&gt;3)-[alpha-D-Man-(1-&gt;2)-alpha-D-Man-(1-&gt;6)]-alpha-D-Man-(1-&gt;6)]-beta-D-Man-(1-&gt;4)-beta-D-GlcNAc-(1-&gt;4)-beta-D-GlcNAc)-L-asparaginyl-[protein] (N-glucan mannose isomer 9A1,2,3B1,2,3) + 4 H2O = N(4)-(alpha-D-Man-(1-&gt;3)-[alpha-D-Man-(1-&gt;3)-[alpha-D-Man-(1-&gt;6)]-alpha-D-Man-(1-&gt;6)]-beta-D-Man-(1-&gt;4)-beta-D-GlcNAc-(1-&gt;4)-beta-D-GlcNAc)-L-asparaginyl-[protein] (N-glucan mannose isomer 5A1,2) + 4 beta-D-mannose. The enzyme catalyses N(4)-(alpha-D-Man-(1-&gt;2)-alpha-D-Man-(1-&gt;2)-alpha-D-Man-(1-&gt;3)-[alpha-D-Man-(1-&gt;3)-[alpha-D-Man-(1-&gt;2)-alpha-D-Man-(1-&gt;6)]-alpha-D-Man-(1-&gt;6)]-beta-D-Man-(1-&gt;4)-beta-D-GlcNAc-(1-&gt;4)-beta-D-GlcNAc)-L-asparaginyl-[protein] (N-glucan mannose isomer 8A1,2,3B1,3) + 3 H2O = N(4)-(alpha-D-Man-(1-&gt;3)-[alpha-D-Man-(1-&gt;3)-[alpha-D-Man-(1-&gt;6)]-alpha-D-Man-(1-&gt;6)]-beta-D-Man-(1-&gt;4)-beta-D-GlcNAc-(1-&gt;4)-beta-D-GlcNAc)-L-asparaginyl-[protein] (N-glucan mannose isomer 5A1,2) + 3 beta-D-mannose. Its pathway is protein modification; protein glycosylation. In terms of biological role, involved in the maturation of Asn-linked oligosaccharides. Progressively trim alpha-1,2-linked mannose residues from Man(9)GlcNAc(2) to produce Man(5)GlcNAc(2). The sequence is that of Mannosyl-oligosaccharide alpha-1,2-mannosidase IA from Drosophila melanogaster (Fruit fly).